The primary structure comprises 278 residues: Formamidopyrimidine-DNA glycosylase (278 aa).

P2 (schiff-base intermediate with DNA) is an active-site residue. E3 serves as the catalytic Proton donor. Catalysis depends on K57, which acts as the Proton donor; for beta-elimination activity. 3 residues coordinate DNA: H90, R109, and K150. Residues 235–269 form an FPG-type zinc finger; sequence QVYGRAGEPCRQCGHPIEIAKHGQRSTFFCRHCQF. The active-site Proton donor; for delta-elimination activity is the R259.

The protein belongs to the FPG family. As to quaternary structure, monomer. It depends on Zn(2+) as a cofactor.

The enzyme catalyses Hydrolysis of DNA containing ring-opened 7-methylguanine residues, releasing 2,6-diamino-4-hydroxy-5-(N-methyl)formamidopyrimidine.. It catalyses the reaction 2'-deoxyribonucleotide-(2'-deoxyribose 5'-phosphate)-2'-deoxyribonucleotide-DNA = a 3'-end 2'-deoxyribonucleotide-(2,3-dehydro-2,3-deoxyribose 5'-phosphate)-DNA + a 5'-end 5'-phospho-2'-deoxyribonucleoside-DNA + H(+). In terms of biological role, involved in base excision repair of DNA damaged by oxidation or by mutagenic agents. Acts as a DNA glycosylase that recognizes and removes damaged bases. Has a preference for oxidized purines, such as 7,8-dihydro-8-oxoguanine (8-oxoG). Has AP (apurinic/apyrimidinic) lyase activity and introduces nicks in the DNA strand. Cleaves the DNA backbone by beta-delta elimination to generate a single-strand break at the site of the removed base with both 3'- and 5'-phosphates. In Yersinia pestis (strain Pestoides F), this protein is Formamidopyrimidine-DNA glycosylase.